Reading from the N-terminus, the 301-residue chain is Glutamine amidotransferase-like protein GlxB (301 aa).

Cysteine 2 is an active-site residue. A Glutamine amidotransferase type-2 domain is found at cysteine 2 to glutamine 298.

The chain is Glutamine amidotransferase-like protein GlxB (glxB) from Rhizobium meliloti (strain 1021) (Ensifer meliloti).